The chain runs to 150 residues: Lipoprotein signal peptidase (150 aa).

A run of 2 helical transmembrane segments spans residues 58-78 (FFII…FKST) and 85-107 (SFSL…GYVV). Active-site residues include aspartate 108 and aspartate 122. The helical transmembrane segment at 117 to 137 (VFNLADFFITGGVLLLTFLIL) threads the bilayer.

This sequence belongs to the peptidase A8 family.

It is found in the cell membrane. It carries out the reaction Release of signal peptides from bacterial membrane prolipoproteins. Hydrolyzes -Xaa-Yaa-Zaa-|-(S,diacylglyceryl)Cys-, in which Xaa is hydrophobic (preferably Leu), and Yaa (Ala or Ser) and Zaa (Gly or Ala) have small, neutral side chains.. Its pathway is protein modification; lipoprotein biosynthesis (signal peptide cleavage). Its function is as follows. This protein specifically catalyzes the removal of signal peptides from prolipoproteins. In Caldicellulosiruptor bescii (strain ATCC BAA-1888 / DSM 6725 / KCTC 15123 / Z-1320) (Anaerocellum thermophilum), this protein is Lipoprotein signal peptidase.